A 335-amino-acid chain; its full sequence is DNA-directed RNA polymerase subunit alpha (335 aa).

The tract at residues 1–233 is alpha N-terminal domain (alpha-NTD); that stretch reads MIRDEISVSI…DLFIPFLHGE (233 aa). Residues 264–335 form an alpha C-terminal domain (alpha-CTD) region; that stretch reads KEKIAFQLIF…KLFAIDPPRN (72 aa).

The protein belongs to the RNA polymerase alpha chain family. As to quaternary structure, in plastids the minimal PEP RNA polymerase catalytic core is composed of four subunits: alpha, beta, beta', and beta''. When a (nuclear-encoded) sigma factor is associated with the core the holoenzyme is formed, which can initiate transcription.

Its subcellular location is the plastid. It is found in the chloroplast. It carries out the reaction RNA(n) + a ribonucleoside 5'-triphosphate = RNA(n+1) + diphosphate. Functionally, DNA-dependent RNA polymerase catalyzes the transcription of DNA into RNA using the four ribonucleoside triphosphates as substrates. This Pinus thunbergii (Japanese black pine) protein is DNA-directed RNA polymerase subunit alpha.